We begin with the raw amino-acid sequence, 219 residues long: Probable GTP-binding protein EngB (219 aa).

Residues 31–205 enclose the EngB-type G domain; sequence VGVEIAFAGR…LSILNEWCHP (175 aa). Residues 39–46, 66–70, 84–87, 151–154, and 184–186 contribute to the GTP site; these read GRSNAGKS, GRTQL, DLPG, TKSD, and FSS. Mg(2+) contacts are provided by Ser-46 and Thr-68.

The protein belongs to the TRAFAC class TrmE-Era-EngA-EngB-Septin-like GTPase superfamily. EngB GTPase family. It depends on Mg(2+) as a cofactor.

In terms of biological role, necessary for normal cell division and for the maintenance of normal septation. The polypeptide is Probable GTP-binding protein EngB (Shewanella denitrificans (strain OS217 / ATCC BAA-1090 / DSM 15013)).